Reading from the N-terminus, the 232-residue chain is 2-C-methyl-D-erythritol 4-phosphate cytidylyltransferase (232 aa).

The protein belongs to the IspD/TarI cytidylyltransferase family. IspD subfamily.

It catalyses the reaction 2-C-methyl-D-erythritol 4-phosphate + CTP + H(+) = 4-CDP-2-C-methyl-D-erythritol + diphosphate. Its pathway is isoprenoid biosynthesis; isopentenyl diphosphate biosynthesis via DXP pathway; isopentenyl diphosphate from 1-deoxy-D-xylulose 5-phosphate: step 2/6. Its function is as follows. Catalyzes the formation of 4-diphosphocytidyl-2-C-methyl-D-erythritol from CTP and 2-C-methyl-D-erythritol 4-phosphate (MEP). The sequence is that of 2-C-methyl-D-erythritol 4-phosphate cytidylyltransferase from Vibrio cholerae serotype O1 (strain ATCC 39315 / El Tor Inaba N16961).